The chain runs to 90 residues: Protein LURE 1.2 (90 aa).

The N-terminal stretch at 1–19 (MKLPIIFLTLLIFVSSCTS) is a signal peptide. Asn-23 carries N-linked (GlcNAc...) asparagine glycosylation. 3 disulfide bridges follow: Cys-58/Cys-75, Cys-61/Cys-82, and Cys-65/Cys-84. Positions 67–87 (RRGKYIRTCSFERKLCRCSIS) are PRK6 binding.

This sequence belongs to the DEFL family. As to quaternary structure, interacts with MDIS1, MIK1, MIK2 and TDR/PXY, but not with MDIS2. Binds to PRK6 LRRs. As to expression, expressed in the pistil. Detected exclusively in the synergid cells.

It localises to the secreted. Pollen tube attractants guiding pollen tubes to the ovular micropyle. Attracts specifically pollen tubes from A.thaliana, but not those from A.lyrata. Triggers endocytosis of MDIS1 in the pollen tube tip. This Arabidopsis thaliana (Mouse-ear cress) protein is Protein LURE 1.2.